Here is a 389-residue protein sequence, read N- to C-terminus: Succinate--CoA ligase [ADP-forming] subunit beta (389 aa).

The ATP-grasp domain maps to 9–236; that stretch reads RDMFEAHGVP…KDAADPLEAK (228 aa). ATP contacts are provided by residues Lys-45, 52 to 54, Ala-94, and Glu-99; that span reads GRG. Asn-191 and Asp-205 together coordinate Mg(2+). Residues Asn-256 and 318 to 320 each bind substrate; that span reads GIT.

Belongs to the succinate/malate CoA ligase beta subunit family. Heterotetramer of two alpha and two beta subunits. Mg(2+) is required as a cofactor.

The enzyme catalyses succinate + ATP + CoA = succinyl-CoA + ADP + phosphate. It carries out the reaction GTP + succinate + CoA = succinyl-CoA + GDP + phosphate. It functions in the pathway carbohydrate metabolism; tricarboxylic acid cycle; succinate from succinyl-CoA (ligase route): step 1/1. Its function is as follows. Succinyl-CoA synthetase functions in the citric acid cycle (TCA), coupling the hydrolysis of succinyl-CoA to the synthesis of either ATP or GTP and thus represents the only step of substrate-level phosphorylation in the TCA. The beta subunit provides nucleotide specificity of the enzyme and binds the substrate succinate, while the binding sites for coenzyme A and phosphate are found in the alpha subunit. This chain is Succinate--CoA ligase [ADP-forming] subunit beta, found in Arthrobacter sp. (strain FB24).